Here is a 34-residue protein sequence, read N- to C-terminus: Beta-theraphotoxin-Pmu1a (34 aa).

3 disulfides stabilise this stretch: Cys3/Cys18, Cys10/Cys23, and Cys17/Cys30. Leucine amide is present on Leu34.

The protein belongs to the neurotoxin 10 (Hwtx-1) family. 34 (Jztx-26) subfamily. In terms of tissue distribution, expressed by the venom gland.

It is found in the secreted. Its function is as follows. Spider venom neurotoxin that blocks voltage-gated sodium channels Nav1.3/SCN3A and Nav1.8/SCN10A in human (IC(50)=2 uM and IC(50)=4 uM, respectively) and rat (IC(50)=2 uM and IC(50)=2.5 uM, respectively). This Pterinochilus murinus (Mombasa golden starburst baboon spider) protein is Beta-theraphotoxin-Pmu1a.